Here is a 946-residue protein sequence, read N- to C-terminus: Inhibin beta chain (946 aa).

Disordered stretches follow at residues 115–142 (VADR…SSTS) and 174–194 (KSRN…RRRR). The segment covering 128-142 (VSVPTTPNETPSSTS) has biased composition (low complexity). N208, N217, N271, and N389 each carry an N-linked (GlcNAc...) asparagine glycan. Residues 436 to 462 (SPGSHLFNGRGGRTDQRSERDPSHHKY) form a disordered region. The segment covering 447–459 (GRTDQRSERDPSH) has biased composition (basic and acidic residues). N-linked (GlcNAc...) asparagine glycans are attached at residues N471, N484, N542, N561, N566, N732, and N804. Intrachain disulfides connect C837-C846, C845-C912, C874-C943, and C878-C945.

This sequence belongs to the TGF-beta family. Homodimer or heterodimer; disulfide-linked. In terms of processing, cleaved in vitro by metalloproteases tok and tld to produce a 30 kDa product. In terms of tissue distribution, widely expressed in larval brains.

Its subcellular location is the secreted. Controls several aspects of neuronal morphogenesis; essential for optic lobe development, EcR-B1 expression in larval brains, mushroom body remodeling, dorsal neuron morphogenesis and motoneuron axon guidance. Ligands Actbeta and daw act redundantly through the Activin receptor Babo and its transcriptional mediator Smad2 (Smox), to regulate neuroblast numbers and proliferation rates in the developing larval brain. The chain is Inhibin beta chain (Actbeta) from Drosophila melanogaster (Fruit fly).